The chain runs to 139 residues: Large ribosomal subunit protein uL16 (139 aa).

Positions 1–21 (MLSPRKTKFRKQHRGRMRGKA) are enriched in basic residues. A disordered region spans residues 1–23 (MLSPRKTKFRKQHRGRMRGKATR).

It belongs to the universal ribosomal protein uL16 family. As to quaternary structure, part of the 50S ribosomal subunit.

Binds 23S rRNA and is also seen to make contacts with the A and possibly P site tRNAs. The sequence is that of Large ribosomal subunit protein uL16 from Acaryochloris marina (strain MBIC 11017).